The chain runs to 215 residues: Pyrrolidone-carboxylate peptidase (215 aa).

Active-site residues include Glu80, Cys143, and His167.

This sequence belongs to the peptidase C15 family. As to quaternary structure, homotetramer.

The protein localises to the cytoplasm. The catalysed reaction is Release of an N-terminal pyroglutamyl group from a polypeptide, the second amino acid generally not being Pro.. Its function is as follows. Removes 5-oxoproline from various penultimate amino acid residues except L-proline. The chain is Pyrrolidone-carboxylate peptidase from Yersinia pseudotuberculosis serotype O:3 (strain YPIII).